The following is a 419-amino-acid chain: Histidine--tRNA ligase (419 aa).

It belongs to the class-II aminoacyl-tRNA synthetase family. As to quaternary structure, homodimer.

It localises to the cytoplasm. The catalysed reaction is tRNA(His) + L-histidine + ATP = L-histidyl-tRNA(His) + AMP + diphosphate + H(+). This Syntrophotalea carbinolica (strain DSM 2380 / NBRC 103641 / GraBd1) (Pelobacter carbinolicus) protein is Histidine--tRNA ligase.